Here is a 403-residue protein sequence, read N- to C-terminus: GTPase Obg (403 aa).

The 159-residue stretch at 1-159 (MKFIDESLIR…RDLLLELMLL (159 aa)) folds into the Obg domain. Positions 160 to 333 (ADVGMLGFPN…LCRDIMDFII (174 aa)) constitute an OBG-type G domain. GTP contacts are provided by residues 166-173 (GFPNAGKS), 191-195 (FTTLV), 213-216 (DIPG), 283-286 (NKID), and 314-316 (SAA). Positions 173 and 193 each coordinate Mg(2+). The disordered stretch occupies residues 363 to 403 (EYQFDDDEDWDDDWTEEDDDEDWDDDWTEEDDEGIEFIYKP). The segment covering 365-397 (QFDDDEDWDDDWTEEDDDEDWDDDWTEEDDEGI) has biased composition (acidic residues).

This sequence belongs to the TRAFAC class OBG-HflX-like GTPase superfamily. OBG GTPase family. As to quaternary structure, monomer. The cofactor is Mg(2+).

The protein localises to the cytoplasm. In terms of biological role, an essential GTPase which binds GTP, GDP and possibly (p)ppGpp with moderate affinity, with high nucleotide exchange rates and a fairly low GTP hydrolysis rate. Plays a role in control of the cell cycle, stress response, ribosome biogenesis and in those bacteria that undergo differentiation, in morphogenesis control. The chain is GTPase Obg from Haemophilus influenzae (strain PittEE).